A 446-amino-acid polypeptide reads, in one-letter code: tRNA-2-methylthio-N(6)-dimethylallyladenosine synthase (446 aa).

An MTTase N-terminal domain is found at 3-120 (KKLFIETHGC…LPEMIDAARS (118 aa)). The [4Fe-4S] cluster site is built by Cys12, Cys49, Cys83, Cys157, Cys161, and Cys164. Residues 143–375 (RVDGPTAFVS…QSRIHQQGYE (233 aa)) enclose the Radical SAM core domain. Positions 378–442 (RRMVGSTQRI…PHSLRGTLID (65 aa)) constitute a TRAM domain.

The protein belongs to the methylthiotransferase family. MiaB subfamily. Monomer. Requires [4Fe-4S] cluster as cofactor.

It is found in the cytoplasm. It carries out the reaction N(6)-dimethylallyladenosine(37) in tRNA + (sulfur carrier)-SH + AH2 + 2 S-adenosyl-L-methionine = 2-methylsulfanyl-N(6)-dimethylallyladenosine(37) in tRNA + (sulfur carrier)-H + 5'-deoxyadenosine + L-methionine + A + S-adenosyl-L-homocysteine + 2 H(+). Its function is as follows. Catalyzes the methylthiolation of N6-(dimethylallyl)adenosine (i(6)A), leading to the formation of 2-methylthio-N6-(dimethylallyl)adenosine (ms(2)i(6)A) at position 37 in tRNAs that read codons beginning with uridine. The protein is tRNA-2-methylthio-N(6)-dimethylallyladenosine synthase of Pseudomonas aeruginosa (strain UCBPP-PA14).